Consider the following 527-residue polypeptide: Pyruvate kinase 1, cytosolic (527 aa).

Arginine 58 is a binding site for substrate. K(+) contacts are provided by aspartate 60, serine 62, aspartate 92, and threonine 93. 60 to 63 is an ATP binding site; the sequence is DFSW. Substrate is bound at residue lysine 256. Glutamate 258 contacts Mg(2+). Substrate-binding residues include glycine 281, asparagine 282, and threonine 313. Residue asparagine 282 coordinates Mg(2+).

Belongs to the pyruvate kinase family. As to quaternary structure, homotetramer. It depends on Mg(2+) as a cofactor. Requires K(+) as cofactor.

Its subcellular location is the cytoplasm. It localises to the cytosol. It catalyses the reaction pyruvate + ATP = phosphoenolpyruvate + ADP + H(+). The protein operates within carbohydrate degradation; glycolysis; pyruvate from D-glyceraldehyde 3-phosphate: step 5/5. In terms of biological role, key regulatory enzyme of the glycolytic pathway that catalyzes the final step of glycolysis, converting ADP and phosphoenolpyruvate (PEP) to ATP and pyruvate by essentially irreversible transphosphorylation. Is critical for plant growth and development. The polypeptide is Pyruvate kinase 1, cytosolic (Oryza sativa subsp. indica (Rice)).